The following is a 382-amino-acid chain: Sphingosine 1-phosphate receptor 1 (382 aa).

Residues 1-46 lie on the Extracellular side of the membrane; the sequence is MGSTRIPLVKALHSPVSDYVNYDIIVRHYNYTGKLKISADKDNGIK. K10 is subject to N6-acetyllysine. N-linked (GlcNAc...) asparagine glycosylation is present at N30. The helical transmembrane segment at 47 to 68 threads the bilayer; it reads LISVVFILICCFIILENIFVLL. Residues 69-82 lie on the Cytoplasmic side of the membrane; that stretch reads TIWKTKKFHRPMYY. A helical membrane pass occupies residues 83-104; that stretch reads FIGNLALSDLLAGVAYTANLLL. Residues 105–116 lie on the Extracellular side of the membrane; it reads SGATTYKLTPAQ. Residues 117 to 138 form a helical membrane-spanning segment; that stretch reads WFLREGSMFVALSASVFSLLAI. Position 120 to 121 (120 to 121) interacts with sphing-4-enine 1-phosphate; sequence RE. Topologically, residues 139–160 are cytoplasmic; sequence AIERYITMLKMKLHNGSNRFRS. The chain crosses the membrane as a helical span at residues 161-182; the sequence is FLLISACWVISLILGGLPIMGW. Over 183-196 the chain is Extracellular; that stretch reads NCISTLPSCSTVLP. Cysteines 184 and 191 form a disulfide. A helical transmembrane segment spans residues 197 to 224; the sequence is LYHKHYILFCTTVFTLLLLSIVILYCRI. Residues 225–257 are Cytoplasmic-facing; sequence YSLVRTRSRRLTFRKNISKASRSSEKSLALLKT. A Phosphothreonine; by PKB/AKT1 modification is found at T236. Residues 258-278 traverse the membrane as a helical segment; it reads VIIVLGVFIACWAPLFILLLL. Residue 265–269 participates in sphing-4-enine 1-phosphate binding; sequence FIACW. Residues 279–289 are Extracellular-facing; it reads DVGCKVKTCDI. C282 and C287 are oxidised to a cystine. The helical transmembrane segment at 290-310 threads the bilayer; that stretch reads LFRTEYFLVLAVLNSGTNPII. Residues 311–382 lie on the Cytoplasmic side of the membrane; that stretch reads YTLSNKEMRR…MSSGNVNSSS (72 aa). C328 carries the S-palmitoyl cysteine lipid modification. The disordered stretch occupies residues 349–382; it reads EFSRSKSDNSSHPQKDDGDNPETIMSSGNVNSSS. Phosphoserine occurs at positions 351 and 353. The segment covering 351 to 366 has biased composition (basic and acidic residues); that stretch reads SRSKSDNSSHPQKDDG. Polar residues predominate over residues 371–382; the sequence is TIMSSGNVNSSS.

The protein belongs to the G-protein coupled receptor 1 family. As to quaternary structure, interacts with GNAI1 and GNAI3. Interacts with CD69; this interaction promotes S1PR1 degradation. In terms of processing, S1P-induced endothelial cell migration requires the PKB/AKT1-mediated phosphorylation of the third intracellular loop at the Thr-236 residue. Palmitoylated by ZDHHC5. Palmitoylation is required for targeting to plasma membrane, enabling G(i) coupling.

It localises to the cell membrane. The protein localises to the endosome. It is found in the membrane raft. Its function is as follows. G-protein coupled receptor for the bioactive lysosphingolipid sphingosine 1-phosphate (S1P) that seems to be coupled to the G(i) subclass of heteromeric G proteins. Signaling leads to the activation of RAC1, SRC, PTK2/FAK1 and MAP kinases. Plays an important role in cell migration, probably via its role in the reorganization of the actin cytoskeleton and the formation of lamellipodia in response to stimuli that increase the activity of the sphingosine kinase SPHK1. Required for normal chemotaxis toward sphingosine 1-phosphate. Required for normal embryonic heart development and normal cardiac morphogenesis. Plays an important role in the regulation of sprouting angiogenesis and vascular maturation. Inhibits sprouting angiogenesis to prevent excessive sprouting during blood vessel development. Required for normal egress of mature T-cells from the thymus into the blood stream and into peripheral lymphoid organs. Plays a role in the migration of osteoclast precursor cells, the regulation of bone mineralization and bone homeostasis. Plays a role in responses to oxidized 1-palmitoyl-2-arachidonoyl-sn-glycero-3-phosphocholine by pulmonary endothelial cells and in the protection against ventilator-induced lung injury. This is Sphingosine 1-phosphate receptor 1 (S1PR1) from Bos taurus (Bovine).